Here is a 600-residue protein sequence, read N- to C-terminus: MSHVLAAVAWPYANGPRHIGHVSGFGVPSDVFARYMRMTGHDVLMVSGTDEHGTPIQVQADAEGVTPRELADRYNRVIVADLHGLGLSYDLFTRTTTRNHYAVVQELFEGMYRNGYIVPKTTMGAISPSTGRTLPDRYIEGTCPICGYESARGDQCDSCGNQLDPIDLRNPKSKINGETPEFIETEHFFLDLPALAGVLRQWLDTREGWRPNVLRFSKNLLDDLQPRAITRDLEWGVPIPLEGWRDRGDKRIYVWFDAVIGYLSASIEWARRSGDPEAWRRWWSADGQGKDAPGYYFMGKDNIVFHSVIWPALLAGYSGEGSRDGQPGELGRMNLPTEVVSSEFLTMEGRKFSSSRRVVIYVRDFLERYDADALRYFIAVAGPESNDTDFTWAEFLRRNNDELVAGWGNLVNRSISMAAKNFGAIPPVDPAGLTEADEALLAVARAGFGAVGELIGRHRQKQAIGEAMKVVAEANRYLSEQAPWKLKSEADRPRMGTILHVALQVVSDANTLLTPFLPHSAQKIHELLGGTGVHAPMPVVEEVEDLDGGPAYPVLTGDYSVGARWESVPLEVGRPLDPPKPVFRKLDPSIVDEELARLAG.

The short motif at 11–21 (PYANGPRHIGH) is the 'HIGH' region element. 4 residues coordinate Zn(2+): Cys-143, Cys-146, Cys-156, and Cys-159. The 'KMSKS' region motif lies at 351–355 (KFSSS). Ser-354 is an ATP binding site.

The protein belongs to the class-I aminoacyl-tRNA synthetase family. MetG type 1 subfamily. Monomer. The cofactor is Zn(2+).

It localises to the cytoplasm. The enzyme catalyses tRNA(Met) + L-methionine + ATP = L-methionyl-tRNA(Met) + AMP + diphosphate. Functionally, is required not only for elongation of protein synthesis but also for the initiation of all mRNA translation through initiator tRNA(fMet) aminoacylation. This Salinispora arenicola (strain CNS-205) protein is Methionine--tRNA ligase.